We begin with the raw amino-acid sequence, 337 residues long: uncharacterized protein (337 aa).

The region spanning 5–235 is the ABC transporter domain; sequence VEFDNVSRLY…PRTPFVAGFV (231 aa). Position 37-44 (37-44) interacts with ATP; the sequence is GPSGSGKT.

This sequence belongs to the ABC transporter superfamily.

In terms of biological role, probably part of the ABC transporter complex YdcSTUV. Probably responsible for energy coupling to the transport system. This is an uncharacterized protein from Escherichia coli (strain K12).